The primary structure comprises 832 residues: Golgin subfamily A member 6-like protein 24 (832 aa).

Disordered stretches follow at residues methionine 1–leucine 107, glutamine 303–glutamine 333, methionine 351–arginine 431, glutamine 508–glutamate 652, and glutamine 664–histidine 832. Residues leucine 13–threonine 27 are compositionally biased toward basic residues. Over residues methionine 37–proline 58 the composition is skewed to basic and acidic residues. Polar residues-rich tracts occupy residues glutamine 59–serine 69 and asparagine 77–glycine 89. The segment covering serine 92 to leucine 107 has biased composition (basic and acidic residues). Residues leucine 163–lysine 828 are a coiled coil. 2 stretches are compositionally biased toward basic and acidic residues: residues glutamine 664–glutamate 684 and glutamine 692–histidine 832.

Belongs to the GOLGA6 family.

The chain is Golgin subfamily A member 6-like protein 24 from Homo sapiens (Human).